A 280-amino-acid chain; its full sequence is UPF0494 membrane protein SPAC212.01c (280 aa).

Transmembrane regions (helical) follow at residues 107-127 (WPLL…KFEV), 144-164 (IWVP…SLIF), 178-198 (VIIA…GMII), and 199-219 (AALG…LYFG).

Belongs to the UPF0494 family.

It localises to the membrane. In Schizosaccharomyces pombe (strain 972 / ATCC 24843) (Fission yeast), this protein is UPF0494 membrane protein SPAC212.01c.